The sequence spans 203 residues: SCO2-like protein RT0576 (203 aa).

Positions K42–E203 constitute a Thioredoxin domain. C80, C84, and H170 together coordinate Cu cation.

Belongs to the SCO1/2 family.

This Rickettsia typhi (strain ATCC VR-144 / Wilmington) protein is SCO2-like protein RT0576.